Consider the following 400-residue polypeptide: Methylthioribose kinase (400 aa).

ATP-binding positions include asparagine 44, lysine 61, and 115–117 (EDL). Position 233 (aspartate 233) interacts with substrate. 250 to 252 (DPE) provides a ligand contact to ATP. Arginine 340 serves as a coordination point for substrate.

It belongs to the methylthioribose kinase family. In terms of assembly, homodimer.

The catalysed reaction is 5-(methylsulfanyl)-D-ribose + ATP = 5-(methylsulfanyl)-alpha-D-ribose 1-phosphate + ADP + H(+). The protein operates within amino-acid biosynthesis; L-methionine biosynthesis via salvage pathway; S-methyl-5-thio-alpha-D-ribose 1-phosphate from S-methyl-5'-thioadenosine (hydrolase route): step 2/2. Catalyzes the phosphorylation of methylthioribose into methylthioribose-1-phosphate. This Geobacillus sp. (strain WCH70) protein is Methylthioribose kinase.